A 265-amino-acid chain; its full sequence is Mlc titration factor A (265 aa).

4 residues coordinate Zn(2+): His111, His148, His152, and Glu211.

The protein belongs to the MtfA family. As to quaternary structure, interacts with Mlc. Requires Zn(2+) as cofactor.

The protein resides in the cytoplasm. Functionally, involved in the modulation of the activity of the glucose-phosphotransferase system (glucose-PTS). Interacts with the transcriptional repressor Mlc, preventing its interaction with DNA and leading to the modulation of expression of genes regulated by Mlc, including ptsG, which encodes the PTS system glucose-specific EIICB component. Its function is as follows. Shows zinc-dependent metallopeptidase activity. This chain is Mlc titration factor A, found in Cronobacter sakazakii (strain ATCC BAA-894) (Enterobacter sakazakii).